Reading from the N-terminus, the 100-residue chain is Aspartyl/glutamyl-tRNA(Asn/Gln) amidotransferase subunit C (100 aa).

This sequence belongs to the GatC family. In terms of assembly, heterotrimer of A, B and C subunits.

It carries out the reaction L-glutamyl-tRNA(Gln) + L-glutamine + ATP + H2O = L-glutaminyl-tRNA(Gln) + L-glutamate + ADP + phosphate + H(+). It catalyses the reaction L-aspartyl-tRNA(Asn) + L-glutamine + ATP + H2O = L-asparaginyl-tRNA(Asn) + L-glutamate + ADP + phosphate + 2 H(+). Allows the formation of correctly charged Asn-tRNA(Asn) or Gln-tRNA(Gln) through the transamidation of misacylated Asp-tRNA(Asn) or Glu-tRNA(Gln) in organisms which lack either or both of asparaginyl-tRNA or glutaminyl-tRNA synthetases. The reaction takes place in the presence of glutamine and ATP through an activated phospho-Asp-tRNA(Asn) or phospho-Glu-tRNA(Gln). This Streptococcus pneumoniae (strain Taiwan19F-14) protein is Aspartyl/glutamyl-tRNA(Asn/Gln) amidotransferase subunit C.